The following is a 464-amino-acid chain: E3 ubiquitin-protein ligase parkin (464 aa).

The 76-residue stretch at 1-76 (MIVFVRFNSS…VHIVQRPRRR (76 aa)) folds into the Ubiquitin-like domain. Phosphoserine; by PINK1 is present on serine 65. The interval 70 to 96 (VQRPRRRSHETNASGGDEPQSTSEGSI) is disordered. The segment at 77-236 (SHETNASGGD…LITSNRRSIP (160 aa)) is necessary for PINK1-dependent localization to mitochondria. A Phosphothreonine modification is found at threonine 80. The segment covering 80–96 (TNASGGDEPQSTSEGSI) has biased composition (polar residues). The segment at 140–224 (PTYNSFFIYC…PTSDKDTSVA (85 aa)) adopts an RING-type 0; atypical zinc-finger fold. The residue at position 174 (threonine 174) is a Phosphothreonine; by PINK1. The segment at 203–237 (TRAEFFFKCGAHPTSDKDTSVALNLITSNRRSIPC) is SYT11 binding 1. Position 216 is a phosphothreonine (threonine 216). The interval 233-464 (RSIPCIACTD…ACMGDHWFDV (232 aa)) is TRIAD supradomain. Zn(2+)-binding residues include cysteine 237, cysteine 240, cysteine 252, histidine 256, cysteine 259, cysteine 262, cysteine 288, cysteine 292, cysteine 331, and cysteine 336. The RING-type 1 zinc finger occupies 237 to 292 (CIACTDVRSPVLVFQCNHRHVICLDCFHLYCVTRLNDRQFVHDAQLGYSLPCVAGC). The interval 256–292 (HVICLDCFHLYCVTRLNDRQFVHDAQLGYSLPCVAGC) is SYT11 binding 2. The IBR-type zinc-finger motif lies at 312–376 (TRYQQYGAEE…CKEAYHEGDC (65 aa)). Residue lysine 348 forms a Glycyl lysine isopeptide (Lys-Gly) (interchain with G-Cter in ISG15) linkage. Zn(2+) contacts are provided by cysteine 351, cysteine 359, cysteine 364, and cysteine 367. Residue lysine 368 forms a Glycyl lysine isopeptide (Lys-Gly) (interchain with G-Cter in ISG15) linkage. Zn(2+) contacts are provided by histidine 372 and cysteine 376. Positions 377–409 (DSLLEPSGATSQAYRVDKRAAEQARWEEASKET) are REP. Residues cysteine 417 and cysteine 420 each contribute to the Zn(2+) site. Residues 417-448 (CPRCNVPIEKNGGCMHMKCPQPQCKLEWCWNC) form an RING-type 2; atypical zinc finger. Cysteine 430 is an active-site residue. Positions 435, 440, 445, 448, 456, and 460 each coordinate Zn(2+).

This sequence belongs to the RBR family. Parkin subfamily. As to quaternary structure, forms an E3 ubiquitin ligase complex with UBE2L3 or UBE2L6. Mediates 'Lys-63'-linked polyubiquitination by associating with UBE2V1. Part of a SCF-like complex, consisting of PRKN, CUL1 and FBXW7. Interacts with SNCAIP. Binds to the C2A and C2B domains of SYT11. Interacts and regulates the turnover of SEPTIN5. Part of a complex, including STUB1, HSP70 and GPR37. The amount of STUB1 in the complex increases during ER stress. STUB1 promotes the dissociation of HSP70 from PRKN and GPR37, thus facilitating PRKN-mediated GPR37 ubiquitination. HSP70 transiently associates with unfolded GPR37 and inhibits the E3 activity of PRKN, whereas, STUB1 enhances the E3 activity of PRKN through promotion of dissociation of HSP70 from PRKN-GPR37 complexes. Interacts with PSMD4 and PACRG. Interacts with LRRK2. Interacts with RANBP2. Interacts with SUMO1 but not SUMO2, which promotes nuclear localization and autoubiquitination. Interacts (via first RING-type domain) with AIMP2 (via N-terminus). Interacts with PSMA7 and RNF41. Interacts with PINK1. Forms a complex with PINK1 and PARK7. Interacts with CHPF, the interaction with isoform 2 may facilitate PRKN transport into the mitochondria. Interacts with MFN2 (phosphorylated), promotes PRKN localization in dysfunctional depolarized mitochondria. Interacts with FBXO7; this promotes translocation to dysfunctional depolarized mitochondria. Interacts with ZNF746. Interacts with heat shock protein 70 family members, including HSPA1L, HSPA1A and HSPA8; interaction HSPA1L promotes translocation to damaged mitochondria. Interacts with BAG4 and, to a lesser extent, BAG5; interaction with BAG4 inhibits translocation to damaged mitochondria. Forms a complex with PRKN and PARK7. Interacts with AMBRA1. Auto-ubiquitinates in an E2-dependent manner leading to its own degradation. Also polyubiquitinated by RNF41 for proteasomal degradation. Post-translationally, S-nitrosylated. In terms of processing, phosphorylated. Activation requires phosphorylation at Ser-65 by PINK1 and binding to PINK1 phosphorylated ubiquitin. Phosphorylation at Thr-174 by PINK1 and at Thr-216 is important for mitochondrial localization. As to expression, expressed in all subdivisions of the brain (at protein level). Highly expressed in brainstem, cranial nerve, pontine, cerebellar nuclei, indusium griseum, nuclei reticularis, strata oriens and laccunosum moleculare of the hippocampal CA2 region. Low levels were found in the telencephalon and diencephalon. Expressed in heart, liver, skeletal muscle, kidney and testis.

The protein resides in the cytoplasm. Its subcellular location is the cytosol. The protein localises to the nucleus. It is found in the endoplasmic reticulum. It localises to the mitochondrion. The protein resides in the mitochondrion outer membrane. Its subcellular location is the cell projection. The protein localises to the neuron projection. It is found in the postsynaptic density. It localises to the presynapse. The catalysed reaction is [E2 ubiquitin-conjugating enzyme]-S-ubiquitinyl-L-cysteine + [acceptor protein]-L-lysine = [E2 ubiquitin-conjugating enzyme]-L-cysteine + [acceptor protein]-N(6)-ubiquitinyl-L-lysine.. It participates in protein modification; protein ubiquitination. Its activity is regulated as follows. In the autoinhibited state the side chain of Phe-462 inserts into a hydrophobic groove in RING-0, occluding the ubiquitin acceptor site Cys-430, whereas the REP repressor element binds RING-1 and blocks its E2-binding site. Activation of PRKN requires 2 steps: (1) phosphorylation at Ser-65 by PINK1 and (2) binding to phosphorylated ubiquitin, leading to unlock repression of the catalytic Cys-430 by the RING-0 region via an allosteric mechanism and converting PRKN to its fully-active form. According to another report, phosphorylation at Ser-65 by PINK1 is not essential for activation and only binding to phosphorylated ubiquitin is essential to unlock repression. In addition, ISG15 conjugation positively regulates its ubiquitin E3 ligase activity by suppressing the intramolecular interaction that maintains its autoinhibited conformation. In terms of biological role, functions within a multiprotein E3 ubiquitin ligase complex, catalyzing the covalent attachment of ubiquitin moieties onto substrate proteins. Substrates include SYT11 and VDAC1. Other substrates are BCL2, CCNE1, GPR37, RHOT1/MIRO1, MFN1, MFN2, STUB1, SNCAIP, SEPTIN5, TOMM20, USP30, ZNF746, MIRO1 and AIMP2. Mediates monoubiquitination as well as 'Lys-6', 'Lys-11', 'Lys-48'-linked and 'Lys-63'-linked polyubiquitination of substrates depending on the context. Participates in the removal and/or detoxification of abnormally folded or damaged protein by mediating 'Lys-63'-linked polyubiquitination of misfolded proteins such as PARK7: 'Lys-63'-linked polyubiquitinated misfolded proteins are then recognized by HDAC6, leading to their recruitment to aggresomes, followed by degradation. Mediates 'Lys-63'-linked polyubiquitination of a 22 kDa O-linked glycosylated isoform of SNCAIP, possibly playing a role in Lewy-body formation. Mediates monoubiquitination of BCL2, thereby acting as a positive regulator of autophagy. Protects against mitochondrial dysfunction during cellular stress, by acting downstream of PINK1 to coordinate mitochondrial quality control mechanisms that remove and replace dysfunctional mitochondrial components. Depending on the severity of mitochondrial damage and/or dysfunction, activity ranges from preventing apoptosis and stimulating mitochondrial biogenesis to regulating mitochondrial dynamics and eliminating severely damaged mitochondria via mitophagy. Activation and recruitment onto the outer membrane of damaged/dysfunctional mitochondria (OMM) requires PINK1-mediated phosphorylation of both PRKN and ubiquitin. After mitochondrial damage, functions with PINK1 to mediate the decision between mitophagy or preventing apoptosis by inducing either the poly- or monoubiquitination of VDAC1, respectively; polyubiquitination of VDAC1 promotes mitophagy, while monoubiquitination of VDAC1 decreases mitochondrial calcium influx which ultimately inhibits apoptosis. When cellular stress results in irreversible mitochondrial damage, promotes the autophagic degradation of dysfunctional depolarized mitochondria (mitophagy) by promoting the ubiquitination of mitochondrial proteins such as TOMM20, RHOT1/MIRO1, MFN1 and USP30. Preferentially assembles 'Lys-6'-, 'Lys-11'- and 'Lys-63'-linked polyubiquitin chains, leading to mitophagy. The PINK1-PRKN pathway also promotes fission of damaged mitochondria by PINK1-mediated phosphorylation which promotes the PRKN-dependent degradation of mitochondrial proteins involved in fission such as MFN2. This prevents the refusion of unhealthy mitochondria with the mitochondrial network or initiates mitochondrial fragmentation facilitating their later engulfment by autophagosomes. Regulates motility of damaged mitochondria via the ubiquitination and subsequent degradation of MIRO1 and MIRO2; in motor neurons, this likely inhibits mitochondrial intracellular anterograde transport along the axons which probably increases the chance of the mitochondria undergoing mitophagy in the soma. Involved in mitochondrial biogenesis via the 'Lys-48'-linked polyubiquitination of transcriptional repressor ZNF746/PARIS which leads to its subsequent proteasomal degradation and allows activation of the transcription factor PPARGC1A. Limits the production of reactive oxygen species (ROS). Regulates cyclin-E during neuronal apoptosis. In collaboration with CHPF isoform 2, may enhance cell viability and protect cells from oxidative stress. Independently of its ubiquitin ligase activity, protects from apoptosis by the transcriptional repression of p53/TP53. May protect neurons against alpha synuclein toxicity, proteasomal dysfunction, GPR37 accumulation, and kainate-induced excitotoxicity. May play a role in controlling neurotransmitter trafficking at the presynaptic terminal and in calcium-dependent exocytosis. May represent a tumor suppressor gene. The chain is E3 ubiquitin-protein ligase parkin from Mus musculus (Mouse).